Consider the following 365-residue polypeptide: Aminomethyltransferase (365 aa).

This sequence belongs to the GcvT family. In terms of assembly, the glycine cleavage system is composed of four proteins: P, T, L and H.

It catalyses the reaction N(6)-[(R)-S(8)-aminomethyldihydrolipoyl]-L-lysyl-[protein] + (6S)-5,6,7,8-tetrahydrofolate = N(6)-[(R)-dihydrolipoyl]-L-lysyl-[protein] + (6R)-5,10-methylene-5,6,7,8-tetrahydrofolate + NH4(+). The glycine cleavage system catalyzes the degradation of glycine. This is Aminomethyltransferase from Yersinia pseudotuberculosis serotype O:1b (strain IP 31758).